A 113-amino-acid chain; its full sequence is Large ribosomal subunit protein bL20c (113 aa).

It belongs to the bacterial ribosomal protein bL20 family.

The protein resides in the plastid. It is found in the chloroplast. Binds directly to 23S ribosomal RNA and is necessary for the in vitro assembly process of the 50S ribosomal subunit. It is not involved in the protein synthesizing functions of that subunit. The protein is Large ribosomal subunit protein bL20c of Nephroselmis olivacea (Green alga).